Here is a 145-residue protein sequence, read N- to C-terminus: Allergen MAG29 (145 aa).

Disordered stretches follow at residues lysine 1 to glutamine 21 and alanine 103 to aspartate 145. Over residues glycine 104–serine 137 the composition is skewed to gly residues.

The protein belongs to the heat shock protein 70 family.

The chain is Allergen MAG29 (MAG29) from Dermatophagoides farinae (American house dust mite).